The chain runs to 709 residues: Elongation factor G (709 aa).

In terms of domain architecture, tr-type G spans 9–295 (AKVRNIGIMA…AVVRYLPTPL (287 aa)). Residues 18 to 25 (AHIDAGKT), 86 to 90 (DTPGH), and 140 to 143 (NKLD) contribute to the GTP site.

This sequence belongs to the TRAFAC class translation factor GTPase superfamily. Classic translation factor GTPase family. EF-G/EF-2 subfamily.

The protein localises to the cytoplasm. Functionally, catalyzes the GTP-dependent ribosomal translocation step during translation elongation. During this step, the ribosome changes from the pre-translocational (PRE) to the post-translocational (POST) state as the newly formed A-site-bound peptidyl-tRNA and P-site-bound deacylated tRNA move to the P and E sites, respectively. Catalyzes the coordinated movement of the two tRNA molecules, the mRNA and conformational changes in the ribosome. The protein is Elongation factor G of Streptomyces avermitilis (strain ATCC 31267 / DSM 46492 / JCM 5070 / NBRC 14893 / NCIMB 12804 / NRRL 8165 / MA-4680).